We begin with the raw amino-acid sequence, 290 residues long: Protein MGF 110-9L (290 aa).

The next 3 membrane-spanning stretches (helical) occupy residues 1–19 (MKVIVFLLVLLEMQRVIQN), 128–148 (VENIKHTCLCMVATIALMVYI), and 163–183 (LLIFLGIYLLLGILMTNIIMN). N-linked (GlcNAc...) asparagine; by host glycosylation is found at Asn-242 and Asn-267.

Belongs to the asfivirus MGF 110 family.

The protein resides in the host membrane. Functionally, plays a role in virus cell tropism, and may be required for efficient virus replication in macrophages. The protein is Protein MGF 110-9L of Ornithodoros (relapsing fever ticks).